Consider the following 243-residue polypeptide: MAQPLCEPRSESWILSPAGRQPPMPSDGNSVCSPAWSSDPWDGAQASSPAPPCARPARRAGTPGRRGTHGSRLGSGQRQSASEREKLRMRTLARALHELRRFLPPSVAPTGQNLTKIETLRLAIRYIGHLSAVLGLSEDNLRRQRHAVSPRGCPLCPDSDLAQSQSLGPRLSPAVCSGVSWGSPPAYPRPRVAAESWDPSFLYAETASQERQEMEPSPSSPLFSSDMLALLETWTPPQEWPPA.

The interval 1-86 (MAQPLCEPRS…QRQSASEREK (86 aa)) is disordered. The span at 27 to 36 (DGNSVCSPAW) shows a compositional bias: polar residues. In terms of domain architecture, bHLH spans 76–130 (GQRQSASEREKLRMRTLARALHELRRFLPPSVAPTGQNLTKIETLRLAIRYIGHL). Positions 153 to 157 (CPLCP) match the CPLCP motif. Residues 204 to 228 (AETASQERQEMEPSPSSPLFSSDML) form a disordered region.

As to expression, no expression was detected in adult tissues except the testis. Expression in the testis was regulated developmentally; expressed 2 weeks after birth, and increases, reaching the full expression level in mature testes.

Its subcellular location is the nucleus. In terms of biological role, transcription factor. Plays a role in the epithelialization of somitic mesoderm and in the development of cardiac mesoderm. Defines the rostrocaudal patterning of the somites by participating in distinct Notch pathways. In Mus musculus (Mouse), this protein is Mesoderm posterior protein 1 (Mesp1).